The primary structure comprises 887 residues: Cytoplasmic aconitate hydratase (887 aa).

Residues glutamine 84 and 204-206 each bind substrate; that span reads DSH. Cysteine 436, cysteine 502, and cysteine 505 together coordinate [4Fe-4S] cluster. Substrate-binding positions include arginine 535, arginine 540, arginine 697, and 777 to 778; that span reads SR.

Belongs to the aconitase/IPM isomerase family. As to quaternary structure, interacts with gex-3. [4Fe-4S] cluster serves as cofactor.

It localises to the cytoplasm. It is found in the cytosol. The catalysed reaction is citrate = D-threo-isocitrate. Catalyzes the isomerization of citrate to isocitrate via cis-aconitate. Has probably no RNA-binding activity. This Caenorhabditis elegans protein is Cytoplasmic aconitate hydratase (aco-1).